We begin with the raw amino-acid sequence, 834 residues long: Protein argonaute (834 aa).

Positions 210–326 (SLLQILMEYT…LPIEFCFVVK (117 aa)) constitute a PAZ domain. The region spanning 500 to 799 (YLFFILDKNS…VSNLARYQDV (300 aa)) is the Piwi domain.

The protein belongs to the argonaute family. Ago subfamily. Ago1, chp1 and tas3 interact to form the core of the RNA-induced transcriptional silencing (RITS) complex. The RITS complex interacts with the RDRC complex via interaction between ago1 and hrr1. Clr4 has a role in mediating this interaction. Component of the argonaute siRNA chaperone (ARC) complex composed of ago1, arb1 and arb2. Interacts with arb1.

The protein resides in the cytoplasm. Its subcellular location is the nucleus. It is found in the chromosome. The protein localises to the centromere. It localises to the telomere. In terms of biological role, required for G1 arrest and mating in response to nitrogen starvation. Ago1 regulation of cytokinesis and cell cycle checkpoints occurs downstream of dcr1. Required, indirectly, for regulated hyperphosphorylation of cdc2. Has a role in the RNA interference (RNAi) pathway which is important for heterochromatin formation, accurate chromosome segregation, centromere cohesion and telomere function during mitosis and meiosis. Required for silencing at the centromeres and for initiation of transcriptionally silent heterochromatin at the mating type locus. Promotes histone H3K9 methylation necessary for centromere function. Required for recruitment of swi6 and cohesin to an ectopic dg repeat. A member of the RNA-induced transcriptional silencing (RITS) complex which is involved in the biosynthesis of dsRNA from primer siRNAs provided by the RNA-directed RNA polymerase (RDRC) complex. Has ribonuclease H-like cleavage (slicing) activity towards target messages complementary to siRNA and can direct site-specific cleavage of RNA substrates via siRNA. Slicing activity is required for both post-transcriptional and transcriptional gene silencing as well as for histone H3 'Lys-10' methylation spreading, conversion of double-stranded siRNA to single-stranded siRNA and siRNA-dependent association of ago1 with chromatin. A member of the argonaute siRNA chaperone (ARC) complex which is required for histone H3K9 methylation, heterochromatin assembly and siRNA generation. The ARC complex contains mostly double-stranded siRNA. This is Protein argonaute (ago1) from Schizosaccharomyces pombe (strain 972 / ATCC 24843) (Fission yeast).